The primary structure comprises 148 residues: Nucleoside diphosphate kinase (148 aa).

Residues Lys9, Phe57, Arg85, Thr91, Arg102, and Asn112 each contribute to the ATP site. Residue Thr91 is modified to Phosphothreonine. Residue His115 is the Pros-phosphohistidine intermediate of the active site. Ser122 carries the post-translational modification Phosphoserine.

Belongs to the NDK family. In terms of assembly, homotetramer. Mg(2+) is required as a cofactor.

The protein localises to the cytoplasm. It catalyses the reaction a 2'-deoxyribonucleoside 5'-diphosphate + ATP = a 2'-deoxyribonucleoside 5'-triphosphate + ADP. It carries out the reaction a ribonucleoside 5'-diphosphate + ATP = a ribonucleoside 5'-triphosphate + ADP. In terms of biological role, major role in the synthesis of nucleoside triphosphates other than ATP. The ATP gamma phosphate is transferred to the NDP beta phosphate via a ping-pong mechanism, using a phosphorylated active-site intermediate. In Oceanobacillus iheyensis (strain DSM 14371 / CIP 107618 / JCM 11309 / KCTC 3954 / HTE831), this protein is Nucleoside diphosphate kinase.